Reading from the N-terminus, the 530-residue chain is Cation transporter HKT2;2 (530 aa).

The Cytoplasmic segment spans residues 1–40 (MTSIYQEFIHTKCQSFRSIGRYVLHSIVLIYRFVSLHVHP). 2 helical membrane-spanning segments follow: residues 41–61 (FWIQLSYFLLISILGSVLLMF) and 102–122 (IVVLTLLMLVGGEVFVSFLGL). At 123 to 186 (MLRLKHKHNP…DLKRSKRLRW (64 aa)) the chain is on the cytoplasmic side. 2 helical membrane-spanning segments follow: residues 187–207 (FLGFVVFSYFVVIHVVGFLLV) and 260–280 (GLLLLFIGQILAGNTLYPLFL). Topologically, residues 281–317 (RILIWFLGKVTKLKDLKLMIKNSDELQYDYLLPKLPT) are cytoplasmic. The next 2 helical transmembrane spans lie at 318–338 (AFLASTVIGLMASLVTLFGSV) and 372–392 (IDCSLIAPAVLVLFIILMYLP). At 393–420 (PSTTFALSNGDEKTANKKAKRKLGLVVR) the chain is on the cytoplasmic side. 2 helical membrane-spanning segments follow: residues 421-441 (NLAFSQLACNAVFVIVALITE) and 494-514 (SLSGWWSDEGKLLLVSVMLYG). The Cytoplasmic portion of the chain corresponds to 515 to 530 (RLKAFTKGTGEYWRLW).

Belongs to the TrkH potassium transport family. HKT (TC 2.A.38.3) subfamily.

It localises to the membrane. In terms of biological role, seems to be involved in regulation of potassium-sodium homeostasis. Seems to act as a potassium-sodium cotransporter, which mediates increased potassium uptake under external sodium accumulation and contributes to salt-tolerance in cultivar indica Pokkali. The sequence is that of Cation transporter HKT2;2 from Oryza sativa subsp. indica (Rice).